A 50-amino-acid chain; its full sequence is METTNFGFVASLLFVGVPTIFLIGLFISTQDGEKSSFYSDSGKGKLGPKR.

A helical transmembrane segment spans residues 7 to 27 (GFVASLLFVGVPTIFLIGLFI).

The protein belongs to the PsbM family. As to quaternary structure, PSII is composed of 1 copy each of membrane proteins PsbA, PsbB, PsbC, PsbD, PsbE, PsbF, PsbH, PsbI, PsbJ, PsbK, PsbL, PsbM, PsbT, PsbX, PsbY, Psb30/Ycf12, peripheral proteins PsbO, CyanoQ (PsbQ), PsbU, PsbV and a large number of cofactors. It forms dimeric complexes.

The protein localises to the cellular thylakoid membrane. Functionally, one of the components of the core complex of photosystem II (PSII). PSII is a light-driven water:plastoquinone oxidoreductase that uses light energy to abstract electrons from H(2)O, generating O(2) and a proton gradient subsequently used for ATP formation. It consists of a core antenna complex that captures photons, and an electron transfer chain that converts photonic excitation into a charge separation. This subunit is found at the monomer-monomer interface. The chain is Photosystem II reaction center protein M from Prochlorococcus marinus (strain MIT 9515).